Here is a 395-residue protein sequence, read N- to C-terminus: Major outer membrane protein P.IA (395 aa).

An N-terminal signal peptide occupies residues 1–19 (MRKKLTALVLSALPLAAVA).

It belongs to the Gram-negative porin family. Homotrimer.

It localises to the cell outer membrane. Serves as a slightly cation selective porin. Major antigen on the gonococcal cell surface and it may have pathogenic properties in addition to its porin activity. This chain is Major outer membrane protein P.IA (porA), found in Neisseria meningitidis serogroup A / serotype 4A (strain DSM 15465 / Z2491).